The chain runs to 319 residues: Ribonucleoside-diphosphate reductase 2 subunit beta (319 aa).

Positions 67, 98, and 101 each coordinate Fe cation. The active site involves Tyr105. 3 residues coordinate Fe cation: Glu158, Glu192, and His195.

This sequence belongs to the ribonucleoside diphosphate reductase small chain family. Tetramer of two alpha and two beta subunits. Fe cation serves as cofactor.

The enzyme catalyses a 2'-deoxyribonucleoside 5'-diphosphate + [thioredoxin]-disulfide + H2O = a ribonucleoside 5'-diphosphate + [thioredoxin]-dithiol. Functionally, provides the precursors necessary for DNA synthesis. Catalyzes the biosynthesis of deoxyribonucleotides from the corresponding ribonucleotides. R2F contains the tyrosyl radical required for catalysis. This chain is Ribonucleoside-diphosphate reductase 2 subunit beta (nrdF), found in Escherichia coli (strain K12).